The following is an 81-amino-acid chain: UPF0180 protein RBAM_013970 (81 aa).

Belongs to the UPF0180 family.

The protein is UPF0180 protein RBAM_013970 of Bacillus velezensis (strain DSM 23117 / BGSC 10A6 / LMG 26770 / FZB42) (Bacillus amyloliquefaciens subsp. plantarum).